The sequence spans 141 residues: Putative pre-16S rRNA nuclease (141 aa).

This sequence belongs to the YqgF nuclease family.

Its subcellular location is the cytoplasm. Its function is as follows. Could be a nuclease involved in processing of the 5'-end of pre-16S rRNA. This chain is Putative pre-16S rRNA nuclease, found in Cupriavidus taiwanensis (strain DSM 17343 / BCRC 17206 / CCUG 44338 / CIP 107171 / LMG 19424 / R1) (Ralstonia taiwanensis (strain LMG 19424)).